The following is a 202-amino-acid chain: Recoverin (202 aa).

Gly-2 carries N-myristoyl glycine lipidation. Cys-39 is subject to Cysteine sulfenic acid (-SOH). 4 consecutive EF-hand domains span residues 41 to 59 (SGRITKQEFQSIYSKFFPE), 61 to 96 (DPKAYAQHVFRSFDANSDGTLDFKEYVIALHMTSAG), 97 to 132 (KTNQKLEWAFSLYDVDGNGAISKSEVLEIVMAIFKM), and 147 to 182 (TPEKRAEKIWGFFGKKDDDKLTEEEFIEGTLANKEI). Residues Asp-74, Asn-76, Asp-78, Thr-80, Glu-85, Asp-110, Asp-112, Asn-114, and Glu-121 each coordinate Ca(2+). The interaction with GRK1 stretch occupies residues 189 to 192 (EPRK).

Belongs to the recoverin family. Homodimer; disulfide-linked. Homodimerization is caused by prolonged intense illumination. May form a complex composed of RHO, GRK1 and RCVRN in a Ca(2+)-dependent manner; RCVRN prevents the interaction between GRK1 and RHO. Interacts (via C-terminus) with GRK1 (via N-terminus); the interaction is Ca(2+)-dependent. In terms of processing, the N-terminal glycine is linked to one of four different types of acyl groups. The most abundant is myristoleate (14:1), but 14:0, 14:2, and 12:0 acyl residues are also present. The Ca(2+) induced exposure of the myristoyl group, known as the calcium-myristoyl switch, promotes RCVRN binding to the photoreceptor cell membranes only when intracellular Ca(2+) concentration is high. Oxidation on Cys-39 occurs in response to prolonged intense illumination and results in the formation of disulfide homodimers, and to a lesser extent disulfide-linked heterodimers.

The protein localises to the photoreceptor inner segment. The protein resides in the cell projection. It is found in the cilium. It localises to the photoreceptor outer segment. Its subcellular location is the photoreceptor outer segment membrane. The protein localises to the perikaryon. Acts as a calcium sensor and regulates phototransduction of cone and rod photoreceptor cells. Modulates light sensitivity of cone photoreceptor in dark and dim conditions. In response to high Ca(2+) levels induced by low light levels, prolongs RHO/rhodopsin activation in rod photoreceptor cells by binding to and inhibiting GRK1-mediated phosphorylation of RHO/rhodopsin. Plays a role in scotopic vision/enhances vision in dim light by enhancing signal transfer between rod photoreceptors and rod bipolar cells. Improves rod photoreceptor sensitivity in dim light and mediates response of rod photoreceptors to facilitate detection of change and motion in bright light. The protein is Recoverin (RCVRN) of Canis lupus familiaris (Dog).